A 160-amino-acid chain; its full sequence is uncharacterized protein (160 aa).

Residues 137-157 (YNILFVVVILLLLFVAWRCYV) traverse the membrane as a helical segment.

It localises to the host membrane. The protein resides in the virion. This is an uncharacterized protein from Acanthamoeba polyphaga mimivirus (APMV).